A 287-amino-acid chain; its full sequence is Cbb3-type cytochrome c oxidase subunit FixP (287 aa).

Topologically, residues 1 to 33 are cytoplasmic; that stretch reads MSQKHIDELSGVETTGHEWDGIQELNNPMPRWW. A helical membrane pass occupies residues 34-54; that stretch reads IWTFYVTILWAIGYAIAYPAI. At 55–287 the chain is on the periplasmic side; that stretch reads PMITSATNGY…IFVHALGGGT (233 aa). Cytochrome c domains lie at 108 to 196 and 203 to 284; these read FAIA…WGLT and GLAA…HALG. Heme c contacts are provided by cysteine 121, cysteine 124, histidine 125, methionine 173, cysteine 216, cysteine 219, histidine 220, and methionine 261.

Belongs to the CcoP / FixP family. Component of the cbb3-type cytochrome c oxidase at least composed of FixN, FixO, FixQ and FixP. Heme c is required as a cofactor.

It is found in the cell inner membrane. Its pathway is energy metabolism; oxidative phosphorylation. In terms of biological role, C-type cytochrome. Part of the cbb3-type cytochrome c oxidase complex. FixP subunit is required for transferring electrons from donor cytochrome c via its heme groups to FixO subunit. From there, electrons are shuttled to the catalytic binuclear center of FixN subunit where oxygen reduction takes place. The complex also functions as a proton pump. This Rhizobium etli (strain ATCC 51251 / DSM 11541 / JCM 21823 / NBRC 15573 / CFN 42) protein is Cbb3-type cytochrome c oxidase subunit FixP.